The primary structure comprises 109 residues: Nucleoid-associated protein Bcer98_0019 (109 aa).

The protein belongs to the YbaB/EbfC family. Homodimer.

Its subcellular location is the cytoplasm. The protein resides in the nucleoid. Its function is as follows. Binds to DNA and alters its conformation. May be involved in regulation of gene expression, nucleoid organization and DNA protection. The sequence is that of Nucleoid-associated protein Bcer98_0019 from Bacillus cytotoxicus (strain DSM 22905 / CIP 110041 / 391-98 / NVH 391-98).